The sequence spans 569 residues: Peroxynitrite isomerase THAP4 (569 aa).

The THAP-type zinc-finger motif lies at 1–85; the sequence is MVICCAAVNC…LKPTAVPSIF (85 aa). A disordered region spans residues 83–219; sequence SIFHLSEKKR…GISMDDFTPP (137 aa). Polar residues predominate over residues 121–130; that stretch reads IGSSLSSSDN. A Phosphoserine modification is found at Ser159. The span at 196-210 shows a compositional bias: low complexity; the sequence is ASSSAADAGGADKSG. The HCFC1-binding motif (HBM) signature appears at 230-233; that stretch reads LHSY. Residue Ser234 is modified to Phosphoserine. The disordered stretch occupies residues 235–312; it reads FSSKHTRERP…EAVQSEHSDA (78 aa). The segment covering 242-262 has biased composition (basic and acidic residues); that stretch reads ERPSVPREPMDRKRLKRDIEP. A compositionally biased stretch (polar residues) spans 265–279; it reads SGNSVAQSPPSSSLT. Residues 280 to 289 show a composition bias toward low complexity; that stretch reads ATPQKASQSP. The nitrobindin stretch occupies residues 407 to 569; it reads PPKLNPVVEP…LHITYKKVTP (163 aa). The heme b site is built by Thr436 and His559.

The protein in the C-terminal section; belongs to the nitrobindin family. In terms of assembly, homodimer. It depends on heme b as a cofactor.

Its subcellular location is the cytoplasm. The protein resides in the nucleus. The enzyme catalyses peroxynitrite = nitrate. Its pathway is nitrogen metabolism. Heme-binding protein able to scavenge peroxynitrite and to protect free L-tyrosine against peroxynitrite-mediated nitration, by acting as a peroxynitrite isomerase that converts peroxynitrite to nitrate. Therefore, this protein likely plays a role in peroxynitrite sensing and in the detoxification of reactive nitrogen and oxygen species (RNS and ROS, respectively). Is able to bind nitric oxide (NO) in vitro, but may act as a sensor of peroxynitrite levels in vivo, possibly modulating the transcriptional activity residing in the N-terminal region. The protein is Peroxynitrite isomerase THAP4 of Rattus norvegicus (Rat).